The following is a 354-amino-acid chain: 3-isopropylmalate dehydrogenase (354 aa).

Residue 76–87 (GPRWDSAKERPE) participates in NAD(+) binding. Substrate-binding residues include arginine 94, arginine 104, arginine 130, and aspartate 215. Residues aspartate 215, aspartate 239, and aspartate 243 each contribute to the Mg(2+) site. 273–285 (GSAPDIAGKNKAN) contributes to the NAD(+) binding site.

Belongs to the isocitrate and isopropylmalate dehydrogenases family. LeuB type 1 subfamily. Homodimer. Mg(2+) is required as a cofactor. It depends on Mn(2+) as a cofactor.

Its subcellular location is the cytoplasm. The catalysed reaction is (2R,3S)-3-isopropylmalate + NAD(+) = 4-methyl-2-oxopentanoate + CO2 + NADH. The protein operates within amino-acid biosynthesis; L-leucine biosynthesis; L-leucine from 3-methyl-2-oxobutanoate: step 3/4. Its function is as follows. Catalyzes the oxidation of 3-carboxy-2-hydroxy-4-methylpentanoate (3-isopropylmalate) to 3-carboxy-4-methyl-2-oxopentanoate. The product decarboxylates to 4-methyl-2 oxopentanoate. This chain is 3-isopropylmalate dehydrogenase, found in Bacillus cereus (strain ATCC 10987 / NRS 248).